A 197-amino-acid polypeptide reads, in one-letter code: Dephospho-CoA kinase (197 aa).

Residues 3–197 (VLGLTGSIGL…IDELRGQRGS (195 aa)) form the DPCK domain. 11–16 (GLGKST) provides a ligand contact to ATP.

It belongs to the CoaE family.

It localises to the cytoplasm. It carries out the reaction 3'-dephospho-CoA + ATP = ADP + CoA + H(+). The protein operates within cofactor biosynthesis; coenzyme A biosynthesis; CoA from (R)-pantothenate: step 5/5. In terms of biological role, catalyzes the phosphorylation of the 3'-hydroxyl group of dephosphocoenzyme A to form coenzyme A. In Mesorhizobium japonicum (strain LMG 29417 / CECT 9101 / MAFF 303099) (Mesorhizobium loti (strain MAFF 303099)), this protein is Dephospho-CoA kinase.